The following is a 76-amino-acid chain: uncharacterized protein (76 aa).

The chain crosses the membrane as a helical span at residues 24-44; it reads GAIFLVCYPLYCVVCFVSVLC.

The protein localises to the membrane. This is an uncharacterized protein from Schizosaccharomyces pombe (strain 972 / ATCC 24843) (Fission yeast).